The primary structure comprises 143 residues: MAKKILGYIKLQVKAGSATPSPPIGPALGQRGVNIMGFCKEFNARTENVEKGTPLPTVITVYQDKSFTFITKTPPATHYLKQITGLKSGAKLTGRETVGEVTRTQLREIAEKKMKDLNANDLEAAAKIIEGSAKAMGLKIVEA.

The protein belongs to the universal ribosomal protein uL11 family. As to quaternary structure, part of the ribosomal stalk of the 50S ribosomal subunit. Interacts with L10 and the large rRNA to form the base of the stalk. L10 forms an elongated spine to which L12 dimers bind in a sequential fashion forming a multimeric L10(L12)X complex. Post-translationally, one or more lysine residues are methylated.

Functionally, forms part of the ribosomal stalk which helps the ribosome interact with GTP-bound translation factors. The polypeptide is Large ribosomal subunit protein uL11 (Caulobacter vibrioides (strain ATCC 19089 / CIP 103742 / CB 15) (Caulobacter crescentus)).